Here is a 273-residue protein sequence, read N- to C-terminus: Large ribosomal subunit protein uL2cz/uL2cy (273 aa).

Disordered regions lie at residues 1-25 (MAKHLYKTPIPSTRKGTLDRQVKSN) and 225-253 (PVDHPHGGGEGKAPIGRKKPTTPWGYPAL).

Belongs to the universal ribosomal protein uL2 family. Part of the 50S ribosomal subunit.

Its subcellular location is the plastid. The protein localises to the chloroplast. The protein is Large ribosomal subunit protein uL2cz/uL2cy (rpl2-A) of Triticum aestivum (Wheat).